Consider the following 569-residue polypeptide: Pyrophosphate--fructose 6-phosphate 1-phosphotransferase subunit beta 2 (569 aa).

Gly-107 contacts diphosphate. Residue Asp-201 participates in Mg(2+) binding. Residues Thr-229 to Asp-231, Lys-268 to Tyr-269, Met-276 to Arg-278, Glu-337, and Tyr-442 to Arg-445 each bind substrate. Catalysis depends on Asp-231, which acts as the Proton acceptor.

The protein belongs to the phosphofructokinase type A (PFKA) family. PPi-dependent PFK group II subfamily. Clade 'Long' sub-subfamily. As to quaternary structure, tetramer of two alpha (regulatory) and two beta (catalytic) chains. It depends on Mg(2+) as a cofactor.

The protein resides in the cytoplasm. The enzyme catalyses beta-D-fructose 6-phosphate + diphosphate = beta-D-fructose 1,6-bisphosphate + phosphate + H(+). It functions in the pathway carbohydrate degradation; glycolysis; D-glyceraldehyde 3-phosphate and glycerone phosphate from D-glucose: step 3/4. Its activity is regulated as follows. Allosterically activated by fructose 2,6-bisphosphate. Functionally, catalytic subunit of pyrophosphate--fructose 6-phosphate 1-phosphotransferase. Catalyzes the phosphorylation of D-fructose 6-phosphate, the first committing step of glycolysis. Uses inorganic phosphate (PPi) as phosphoryl donor instead of ATP like common ATP-dependent phosphofructokinases (ATP-PFKs), which renders the reaction reversible, and can thus function both in glycolysis and gluconeogenesis. The sequence is that of Pyrophosphate--fructose 6-phosphate 1-phosphotransferase subunit beta 2 from Arabidopsis thaliana (Mouse-ear cress).